A 143-amino-acid chain; its full sequence is Transcriptional regulator MraZ (143 aa).

2 consecutive SpoVT-AbrB domains span residues 5-47 (EYLH…PLDE) and 76-119 (ATEC…SQAL).

This sequence belongs to the MraZ family. Forms oligomers.

The protein resides in the cytoplasm. Its subcellular location is the nucleoid. This chain is Transcriptional regulator MraZ, found in Desulfitobacterium hafniense (strain DSM 10664 / DCB-2).